The chain runs to 552 residues: Chaperonin GroEL (552 aa).

Residues 29–32 (TAGP), K50, 86–90 (DGTTT), G420, and D501 each bind ATP.

Belongs to the chaperonin (HSP60) family. As to quaternary structure, forms a cylinder of 14 subunits composed of two heptameric rings stacked back-to-back. Interacts with the co-chaperonin GroES.

The protein resides in the cytoplasm. The catalysed reaction is ATP + H2O + a folded polypeptide = ADP + phosphate + an unfolded polypeptide.. Its function is as follows. Together with its co-chaperonin GroES, plays an essential role in assisting protein folding. The GroEL-GroES system forms a nano-cage that allows encapsulation of the non-native substrate proteins and provides a physical environment optimized to promote and accelerate protein folding. The polypeptide is Chaperonin GroEL (Wolbachia pipientis subsp. Culex pipiens (strain wPip)).